A 296-amino-acid chain; its full sequence is Centromere protein O (296 aa).

Positions 17-105 form a coiled coil; sequence VLAHLERLET…NMKAILQAYR (89 aa).

Belongs to the CENP-O/MCM21 family. In terms of assembly, component of the CENPA-CAD complex, composed of CENPI, CENPK, CENPL, CENPO, CENPP, CENPQ, CENPR and CENPS. The CENPA-CAD complex interacts with the CENPA-NAC complex, at least composed of CENPA, CENPC, CENPH, CENPM, CENPN, CENPT and CENPU.

It localises to the nucleus. The protein localises to the chromosome. It is found in the centromere. Its subcellular location is the kinetochore. Functionally, component of the CENPA-CAD (nucleosome distal) complex, a complex recruited to centromeres which is involved in assembly of kinetochore proteins, mitotic progression and chromosome segregation. May be involved in incorporation of newly synthesized CENPA into centromeres via its interaction with the CENPA-NAC complex. Modulates the kinetochore-bound levels of NDC80 complex. The chain is Centromere protein O (CENPO) from Bos taurus (Bovine).